Reading from the N-terminus, the 156-residue chain is MKLHILAVGHKMPDWIATGFDEYTKRMPPELRIELREIKPEQRSSGRQADSVMAAERLKIEAALPKNARIVALDERGKDWTTMQLAGALPGWQQDGRDVAFLIGGADGLDPQLKARSDMLLRVSSLTLPHAMVRVLLAEQLYRAWTITQNHPYHRV.

S-adenosyl-L-methionine is bound by residues leucine 73, glycine 104, and 123–128 (VSSLTL).

Belongs to the RNA methyltransferase RlmH family. As to quaternary structure, homodimer.

The protein localises to the cytoplasm. The catalysed reaction is pseudouridine(1915) in 23S rRNA + S-adenosyl-L-methionine = N(3)-methylpseudouridine(1915) in 23S rRNA + S-adenosyl-L-homocysteine + H(+). In terms of biological role, specifically methylates the pseudouridine at position 1915 (m3Psi1915) in 23S rRNA. This is Ribosomal RNA large subunit methyltransferase H from Paraburkholderia phytofirmans (strain DSM 17436 / LMG 22146 / PsJN) (Burkholderia phytofirmans).